The primary structure comprises 127 residues: Glycine cleavage system H protein (127 aa).

The Lipoyl-binding domain maps to 22–104 (KVRIGITDFA…YEKAWMIVIE (83 aa)). Lys63 carries the post-translational modification N6-lipoyllysine.

It belongs to the GcvH family. In terms of assembly, the glycine cleavage system is composed of four proteins: P, T, L and H. It depends on (R)-lipoate as a cofactor.

In terms of biological role, the glycine cleavage system catalyzes the degradation of glycine. The H protein shuttles the methylamine group of glycine from the P protein to the T protein. Is also involved in protein lipoylation via its role as an octanoyl/lipoyl carrier protein intermediate. This chain is Glycine cleavage system H protein, found in Geobacillus thermodenitrificans (strain NG80-2).